The sequence spans 492 residues: Glycylpeptide N-tetradecanoyltransferase 2 (492 aa).

The interval 1–77 (MAEDSESAAS…SASDSQEIKN (77 aa)) is disordered. Positions 15-32 (ELDDQDTCGIDGDNEEEN) are enriched in acidic residues. Positions 46 to 57 (KKKKKKQKRKKE) are enriched in basic residues. Over residues 61 to 72 (SGGTKSDSASDS) the composition is skewed to polar residues. Residues His111, Trp116, Leu244, Val246, Ser252, Arg254, Val255, and Ala256 each contribute to the tetradecanoyl-CoA site.

It belongs to the NMT family.

The protein resides in the cytoplasm. Its subcellular location is the membrane. The enzyme catalyses N-terminal glycyl-[protein] + tetradecanoyl-CoA = N-tetradecanoylglycyl-[protein] + CoA + H(+). It catalyses the reaction N-terminal glycyl-L-lysyl-[protein] + tetradecanoyl-CoA = N-terminal glycyl-(N(6)-tetradecanoyl)-L-lysyl-[protein] + CoA + H(+). Functionally, adds a myristoyl group to the N-terminal glycine residue of certain cellular and viral proteins. Also able to mediate N-terminal lysine myristoylation of proteins. In Danio rerio (Zebrafish), this protein is Glycylpeptide N-tetradecanoyltransferase 2.